A 305-amino-acid chain; its full sequence is Dioxygenase hkm4 (305 aa).

The Fe cation site is built by histidine 140, aspartate 142, and histidine 216.

Belongs to the PhyH family. Fe cation serves as cofactor.

Its pathway is secondary metabolite biosynthesis. In terms of biological role, dioxygenase; part of the gene cluster that mediates the biosynthesis of hancockiamides, an unusual new family of N-cinnamoylated piperazines. The NRPS hkm10 and the NmrA-like reductase hkm9 are proposed to convert two molecules of L-Phe to the intermediary piperazine called xenocockiamide A. Xenocockiamide A is then converted to hancockiamide D via a series of hydroxylations and O-methylations. The tyrosinase hkm6 may catalyze an aromatic hydroxylation, then the 2-oxoglutarate-dependent Fe(II) dioxygenase hkm4 and the FAD-dependent phenol hydroxylase hkm7 may catalyze consecutive hydroxylations to install 2 more hydroxy groups, and the methyltransferase hkm8 probably catalyzes two methylations using 2 molecules of S-adenosyl-L-methionine (SAM). The NRPS hkm11 activates and transfers trans-cinnamate supplied by the PAL hkm12 to hancockiamide D and produces hancockiamide A. NRPS Hkm11 has the flexibility to tolerate the bulky hancockiamide G as a substrate and the absence of the acetyl-transferase hkm3 opens up the opportunity for hkm11 to introduce a second N-cinnamoyl moiety. The cytochrome P450 monooxygenase hkm5 catalyzes the methylenedioxy bridge formation, converting hancockiamide A into hancockiamide G. Hkm5 can also convert hancockiamide B into hancockiamide C, and hancockiamide D into hancockiamide H. The N-acetyltransferase hkm3 finally transfers an acetyl group to 1-N of piperazine, converting hancockiamide A into hancockiamide B and hancockiamide G into hancockiamide C. In Aspergillus hancockii, this protein is Dioxygenase hkm4.